The following is a 188-amino-acid chain: GMP synthase [glutamine-hydrolyzing] subunit A (188 aa).

The 186-residue stretch at 3 to 188 (KVLVVAFGGQ…FQNFVELCKR (186 aa)) folds into the Glutamine amidotransferase type-1 domain. Catalysis depends on Cys-79, which acts as the Nucleophile. Catalysis depends on residues His-166 and Glu-168.

In terms of assembly, heterodimer composed of a glutamine amidotransferase subunit (A) and a GMP-binding subunit (B).

The catalysed reaction is XMP + L-glutamine + ATP + H2O = GMP + L-glutamate + AMP + diphosphate + 2 H(+). Its pathway is purine metabolism; GMP biosynthesis; GMP from XMP (L-Gln route): step 1/1. Catalyzes the synthesis of GMP from XMP. This Ignicoccus hospitalis (strain KIN4/I / DSM 18386 / JCM 14125) protein is GMP synthase [glutamine-hydrolyzing] subunit A.